We begin with the raw amino-acid sequence, 668 residues long: Probable syringafactin export ATP-binding/permease protein SyfD (668 aa).

An ABC transporter domain is found at 22 to 260; the sequence is LRLQQVSRSF…APEAQPATPP (239 aa). 58-65 is an ATP binding site; the sequence is GASGSGKS. Residues 242–263 form a disordered region; it reads RRTAQTTQPAPEAQPATPPGPA. Residues 245 to 256 are compositionally biased toward low complexity; sequence AQTTQPAPEAQP. Transmembrane regions (helical) follow at residues 267 to 287, 293 to 313, 541 to 561, 602 to 622, and 631 to 651; these read LLAS…ALIS, LLTM…SAIG, LTLL…IGVM, MGGV…TLFV, and LASV…FGFV.

It belongs to the ABC transporter superfamily. Macrolide exporter (TC 3.A.1.122) family. As to quaternary structure, probably part of a tripartite efflux system, which is composed of an inner membrane transporter, a periplasmic membrane fusion protein, and an outer membrane component.

The protein localises to the cell inner membrane. In terms of biological role, probably involved in the export of syringafactins. This is Probable syringafactin export ATP-binding/permease protein SyfD from Pseudomonas syringae pv. tomato (strain ATCC BAA-871 / DC3000).